The sequence spans 446 residues: MKKAYVKSYGCQMNAYDAGRMADVLAAEGYSATDTVEEADVVVLNTCHIREKAAEKVYSELGRLRVLKGERAESGHDTRIVVAGCVAQAEGREILSRAPAVDVVVGPQSYHRLPDLLRQSRETRVVDTEFPAEDKFDHLPARRNRGVTGFLTVQEGCDKFCAFCVVPYTRGAEVSRSVAAVVDEARRLVEGGVREITLIGQNVNAYHGNGPDGAPATLGHLMDALSAVPGLLRLRYTTSHPNDFADDLIAAHATNPLVMPYLHLPVQSGSDRILHAMNRRHTGDAYRRLIERIRNARPDIALSSDFIVGFPGETDADFAETMRLVSDIGFSAAFSFKYSPRAGTPAAEREDAVPEAVKTERLAALQDLLDRQRHAYNAASVGTLTEILVEKTGRHPGQVAGKTPHLQAVQFDAPASTIGTVVPVRITRAGSNSLFGETLEGAAAAA.

Residues 2–122 enclose the MTTase N-terminal domain; sequence KKAYVKSYGC…LPDLLRQSRE (121 aa). [4Fe-4S] cluster is bound by residues C11, C47, C85, C157, C161, and C164. A Radical SAM core domain is found at 143 to 375; it reads RNRGVTGFLT…QDLLDRQRHA (233 aa). A TRAM domain is found at 378–440; that stretch reads AASVGTLTEI…SNSLFGETLE (63 aa).

It belongs to the methylthiotransferase family. MiaB subfamily. As to quaternary structure, monomer. The cofactor is [4Fe-4S] cluster.

It localises to the cytoplasm. It catalyses the reaction N(6)-dimethylallyladenosine(37) in tRNA + (sulfur carrier)-SH + AH2 + 2 S-adenosyl-L-methionine = 2-methylsulfanyl-N(6)-dimethylallyladenosine(37) in tRNA + (sulfur carrier)-H + 5'-deoxyadenosine + L-methionine + A + S-adenosyl-L-homocysteine + 2 H(+). Catalyzes the methylthiolation of N6-(dimethylallyl)adenosine (i(6)A), leading to the formation of 2-methylthio-N6-(dimethylallyl)adenosine (ms(2)i(6)A) at position 37 in tRNAs that read codons beginning with uridine. This Methylorubrum extorquens (strain PA1) (Methylobacterium extorquens) protein is tRNA-2-methylthio-N(6)-dimethylallyladenosine synthase.